Here is a 231-residue protein sequence, read N- to C-terminus: Fibrillarin-like rRNA/tRNA 2'-O-methyltransferase (231 aa).

Residues 88–89 (TT), 106–107 (EF), 131–132 (DA), and 151–154 (DVAQ) contribute to the S-adenosyl-L-methionine site.

Belongs to the methyltransferase superfamily. Fibrillarin family. Interacts with nop5. Component of box C/D small ribonucleoprotein (sRNP) particles that contain rpl7ae, FlpA and nop5, plus a guide RNA.

Its function is as follows. Involved in pre-rRNA and tRNA processing. Utilizes the methyl donor S-adenosyl-L-methionine to catalyze the site-specific 2'-hydroxyl methylation of ribose moieties in rRNA and tRNA. Site specificity is provided by a guide RNA that base pairs with the substrate. Methylation occurs at a characteristic distance from the sequence involved in base pairing with the guide RNA. This is Fibrillarin-like rRNA/tRNA 2'-O-methyltransferase from Methanococcus aeolicus (strain ATCC BAA-1280 / DSM 17508 / OCM 812 / Nankai-3).